A 273-amino-acid polypeptide reads, in one-letter code: Putative pyruvate, phosphate dikinase regulatory protein (273 aa).

151 to 158 serves as a coordination point for ADP; sequence GVSRTSKT.

This sequence belongs to the pyruvate, phosphate/water dikinase regulatory protein family. PDRP subfamily.

It carries out the reaction N(tele)-phospho-L-histidyl/L-threonyl-[pyruvate, phosphate dikinase] + ADP = N(tele)-phospho-L-histidyl/O-phospho-L-threonyl-[pyruvate, phosphate dikinase] + AMP + H(+). The enzyme catalyses N(tele)-phospho-L-histidyl/O-phospho-L-threonyl-[pyruvate, phosphate dikinase] + phosphate + H(+) = N(tele)-phospho-L-histidyl/L-threonyl-[pyruvate, phosphate dikinase] + diphosphate. Its function is as follows. Bifunctional serine/threonine kinase and phosphorylase involved in the regulation of the pyruvate, phosphate dikinase (PPDK) by catalyzing its phosphorylation/dephosphorylation. The polypeptide is Putative pyruvate, phosphate dikinase regulatory protein (Desulfitobacterium hafniense (strain Y51)).